Reading from the N-terminus, the 880-residue chain is Tyrosine-protein kinase receptor TYRO3 (880 aa).

The N-terminal stretch at 1–28 is a signal peptide; it reads MVYPGPPGLIAGLLLAALSLSCVDGAKA. 2 consecutive Ig-like C2-type domains span residues 29-114 and 125-206; these read LGFV…KSVS and PYFT…AIVE. The Extracellular segment spans residues 29–414; sequence LGFVGHGYNL…QRHPHTRMSW (386 aa). Asparagine 37 and asparagine 49 each carry an N-linked (GlcNAc...) asparagine glycan. Cysteine 50 and cysteine 103 are oxidised to a cystine. N-linked (GlcNAc...) asparagine glycosylation occurs at asparagine 143. Cysteine 146 and cysteine 189 are joined by a disulfide. Fibronectin type-III domains are found at residues 213–306 and 311–401; these read PPFN…TKET and LPQN…SKEE. Residues asparagine 216, asparagine 279, asparagine 351, and asparagine 365 are each glycosylated (N-linked (GlcNAc...) asparagine). The helical transmembrane segment at 415-435 threads the bilayer; sequence VPMVLGILTALVTVVAMTLIF. The Cytoplasmic portion of the chain corresponds to 436 to 880; it reads LRKGRKETRF…MQEEQVVITL (445 aa). Positions 503 to 774 constitute a Protein kinase domain; sequence FTLGRTLGKG…VDLKQRLEAI (272 aa). Residues 509-517 and lysine 535 each bind ATP; that span reads LGKGEFGSV. Aspartate 640 serves as the catalytic Proton acceptor. Position 671 is a phosphotyrosine; by autocatalysis (tyrosine 671). Residues 846–880 form a disordered region; that stretch reads EWSSSAQNGEARGLLHEEEEEEEEEMQEEQVVITL. The segment covering 862–873 has biased composition (acidic residues); the sequence is EEEEEEEEEMQE.

The protein belongs to the protein kinase superfamily. Tyr protein kinase family. AXL/UFO subfamily. Post-translationally, tyrosine phosphorylated upon receptor stimulation. As to expression, detected in brain, spinal cord, intestine, lung, stomach, ovary, testis, skin and eye.

The protein localises to the cell membrane. The enzyme catalyses L-tyrosyl-[protein] + ATP = O-phospho-L-tyrosyl-[protein] + ADP + H(+). In terms of biological role, may be involved in cell adhesion processes, particularly in the central nervous system. This is Tyrosine-protein kinase receptor TYRO3 (tyro3) from Xenopus laevis (African clawed frog).